A 43-amino-acid polypeptide reads, in one-letter code: Large ribosomal subunit protein uL5 (43 aa).

The protein belongs to the universal ribosomal protein uL5 family. As to quaternary structure, part of the 50S ribosomal subunit; part of the 5S rRNA/L5/L18/L25 subcomplex. Contacts the 5S rRNA and the P site tRNA. Forms a bridge to the 30S subunit in the 70S ribosome.

This is one of the proteins that bind and probably mediate the attachment of the 5S RNA into the large ribosomal subunit, where it forms part of the central protuberance. In the 70S ribosome it contacts protein S13 of the 30S subunit (bridge B1b), connecting the 2 subunits; this bridge is implicated in subunit movement. Contacts the P site tRNA; the 5S rRNA and some of its associated proteins might help stabilize positioning of ribosome-bound tRNAs. This chain is Large ribosomal subunit protein uL5 (rplE), found in Serratia marcescens.